The chain runs to 472 residues: Replicative helicase loading/DNA remodeling protein DnaB (472 aa).

Residues 1 to 112 (MADYWKDVLP…ERLFIYELLP (112 aa)) are DDBH1. Residues 210–302 (DLFLAGLSET…VHLREGEQPA (93 aa)) are DDBH2-1. The tract at residues 303–411 (EEDSLDGKLI…RQYLEWAEGK (109 aa)) is DDBH2-2. The disordered stretch occupies residues 415–472 (SKRNQKVIREEKLPDWMTEKETASDSESGQQKLHPQDLEEQKKKMMEEMQKLKKYSAY). Basic and acidic residues-rich tracts occupy residues 421-437 (VIREEKLPDWMTEKETA) and 448-465 (HPQDLEEQKKKMMEEMQK).

This sequence belongs to the DnaB/DnaD family. As to quaternary structure, homotetramer. Also forms higher-order oligomers, can be induced by some ssDNA. The DNA replisome assembles sequentially on oriC in this order; DnaA, DnaD, DnaB, DnaI-DnaC helicase. In atomic force microscopy forms a square with a small central hole. Part of the replication restart primosome which assembles in this order; PriA, DnaD then DnaB. The preferred DNA substrate mimics an arrested DNA replication fork with unreplicated lagging strand. Interacts with DnaC, but probably not as a tetramer. Interacts with DnaD but no interaction with PriA was seen. Interacts with cell cycle regulator CcrZ. In early growth phase only full-length protein is detected, during late growth and stationary phase full-length and C-terminally truncated proteins are seen (at protein level). Truncated protein is only seen in cytoplasmic fractions.

It is found in the cytoplasm. Its subcellular location is the cell membrane. Functionally, helps DnaI load the DnaC replicative helicase onto single-stranded (ss)DNA. During DNA replication from the origin of replication (oriC) in the DNA replisome, DnaD is required after DnaA, before DnaB and before subsequent helicase DnaC loading. Component of the replication restart primosome, which reloads the replicative helicase on sites other than oriC. DnaB, DnaD and DnaI may also be required for a PriA-independent pathway of replication fork restart. DnaB and DnaD work together to allow DnaB access to ssDNA. DNA replication at oriC might originate on the inner face of the cell membrane; DnaB is essential for both replication initiation and cell membrane attachment of the origin region of the chromosome and plasmids. Weakly binds ssDNA, preferentially binds double-stranded (ds)DNA, and replication fork-like substrates. Remodels DNA, laterally compacts supercoiled plasmid and linear DNA, forms beads along the dsDNA. Together DnaB and DnaD form bipolar complexes on plasmid DNA. DnaB and DnaD are also required to load helicase on the repN plasmid origin of replication (oriN). The polypeptide is Replicative helicase loading/DNA remodeling protein DnaB (Bacillus subtilis (strain 168)).